Reading from the N-terminus, the 349-residue chain is Putative transport protein jhp_0514 (349 aa).

Transmembrane regions (helical) follow at residues 6–26 (FFWILFLIGFYWMLYLYQDFL), 27–47 (MDALIAGLLCVGLFQVKVFLN), 56–76 (SFLCVLVLASVVIVPLYFIVY), 143–163 (LKLVTDALFILGLLFFFFYYG), 195–215 (VLLTSLITVILEGVAFGTMII), 224–244 (LGILYGLASLVPAVGGALIWI), 258–278 (EAIFIVLYSILLIGVLIDSVI), and 300–320 (ILIFFSMIAGISQFGFWGIIV).

The protein belongs to the autoinducer-2 exporter (AI-2E) (TC 2.A.86) family.

It localises to the cell membrane. The polypeptide is Putative transport protein jhp_0514 (Helicobacter pylori (strain J99 / ATCC 700824) (Campylobacter pylori J99)).